Consider the following 106-residue polypeptide: ATP-dependent Clp protease adapter protein ClpS (106 aa).

It belongs to the ClpS family. In terms of assembly, binds to the N-terminal domain of the chaperone ClpA.

Involved in the modulation of the specificity of the ClpAP-mediated ATP-dependent protein degradation. The polypeptide is ATP-dependent Clp protease adapter protein ClpS (Pseudoalteromonas atlantica (strain T6c / ATCC BAA-1087)).